A 359-amino-acid chain; its full sequence is tRNA-specific 2-thiouridylase MnmA (359 aa).

ATP contacts are provided by residues 7–14 (AMSGGVDS) and methionine 33. Cysteine 101 serves as the catalytic Nucleophile. Residues cysteine 101 and cysteine 198 are joined by a disulfide bond. Residue glycine 125 participates in ATP binding. An interaction with tRNA region spans residues 148 to 150 (KDQ). Catalysis depends on cysteine 198, which acts as the Cysteine persulfide intermediate.

Belongs to the MnmA/TRMU family.

The protein localises to the cytoplasm. The catalysed reaction is S-sulfanyl-L-cysteinyl-[protein] + uridine(34) in tRNA + AH2 + ATP = 2-thiouridine(34) in tRNA + L-cysteinyl-[protein] + A + AMP + diphosphate + H(+). Functionally, catalyzes the 2-thiolation of uridine at the wobble position (U34) of tRNA, leading to the formation of s(2)U34. The polypeptide is tRNA-specific 2-thiouridylase MnmA (Chloroflexus aurantiacus (strain ATCC 29366 / DSM 635 / J-10-fl)).